Reading from the N-terminus, the 355-residue chain is MAQPTFFQSPPPMTLAAIAAKAKAELADVSQGDKVIKGLAALDEAGPMHLAFFDNLKYADQLARTNAGACLVSPRFEARVPGHVVVVRANQPFRAFVQLAREFHADALRPQPWFGDDGISPQAIIDPTARLEDGVIVEPLAVIGAHVEIGAGTIVGAGAVIGPHVKVGRDCNVGARTVIQCSLIGNDVLIHPGCSIGQDGYGFIFFGANGHTKVPQTGRVIIQNHVEVGAGTTIDRGSLRDTVIGEGTKIDNQVQIGHNVTIGRHCLLAAQIGLAGSLTIGDNVALGAKVGINNHLTIGDGAQVTAMSGVKDDIPPNGRWGGFFAKPTKQWFREIVAVERLVRDQTATSRDEGRE.

His-258 functions as the Proton acceptor in the catalytic mechanism.

Belongs to the transferase hexapeptide repeat family. LpxD subfamily. In terms of assembly, homotrimer.

It carries out the reaction a UDP-3-O-[(3R)-3-hydroxyacyl]-alpha-D-glucosamine + a (3R)-hydroxyacyl-[ACP] = a UDP-2-N,3-O-bis[(3R)-3-hydroxyacyl]-alpha-D-glucosamine + holo-[ACP] + H(+). The protein operates within bacterial outer membrane biogenesis; LPS lipid A biosynthesis. In terms of biological role, catalyzes the N-acylation of UDP-3-O-acylglucosamine using 3-hydroxyacyl-ACP as the acyl donor. Is involved in the biosynthesis of lipid A, a phosphorylated glycolipid that anchors the lipopolysaccharide to the outer membrane of the cell. The protein is UDP-3-O-acylglucosamine N-acyltransferase of Bradyrhizobium sp. (strain ORS 278).